The primary structure comprises 232 residues: MTATKMNAQEIIQFIANAEKKTSVKVTFEGQLATAVPSSVVKLGNVLFGDWKDVAPLLEGLVENQDYVVEQDARNSAVPLLDKRAINARIEPGAIIRDQVKIGDNAVIMMGAVINIGAEIGAGTMIDMGAILGGRAIVGKNSHVGAGAVLAGVIEPVSAEPVRVGDNVLIGANAVVIEGVQIGSGSVVAAGAIVTQDVPENVVVAGVPARIIKEIDAQTQQKTALEDALRTL.

The protein belongs to the transferase hexapeptide repeat family. DapH subfamily.

It carries out the reaction (S)-2,3,4,5-tetrahydrodipicolinate + acetyl-CoA + H2O = L-2-acetamido-6-oxoheptanedioate + CoA. It functions in the pathway amino-acid biosynthesis; L-lysine biosynthesis via DAP pathway; LL-2,6-diaminopimelate from (S)-tetrahydrodipicolinate (acetylase route): step 1/3. Its function is as follows. Catalyzes the transfer of an acetyl group from acetyl-CoA to tetrahydrodipicolinate. This is 2,3,4,5-tetrahydropyridine-2,6-dicarboxylate N-acetyltransferase from Streptococcus pneumoniae (strain Taiwan19F-14).